We begin with the raw amino-acid sequence, 320 residues long: Mitochondrial glycine transporter (320 aa).

Solcar repeat units follow at residues 8–92, 121–205, and 223–307; these read SKTT…LRQG, LSNW…LKRR, and SSSS…LILR. The next 6 helical transmembrane spans lie at 14–39, 67–93, 127–152, 180–203, 227–253, and 282–300; these read FAAG…TRVQ, GTLP…RQGL, LATG…VRYE, GFGA…EQLK, INFV…KTRL, and GLGL…AWTV.

This sequence belongs to the mitochondrial carrier (TC 2.A.29) family. SLC25A38 subfamily.

Its subcellular location is the mitochondrion inner membrane. The catalysed reaction is glycine(in) = glycine(out). Its function is as follows. Mitochondrial glycine transporter that imports glycine into the mitochondrial matrix. Plays an important role in providing glycine for the first enzymatic step in heme biosynthesis, the condensation of glycine with succinyl-CoA to produce 5-aminolevulinate (ALA) in the mitochondrial matrix. This chain is Mitochondrial glycine transporter, found in Aspergillus fumigatus (strain CBS 144.89 / FGSC A1163 / CEA10) (Neosartorya fumigata).